A 429-amino-acid chain; its full sequence is Adenylosuccinate synthetase (429 aa).

Residues 12 to 18 (GDEGKGK) and 40 to 42 (GHT) contribute to the GTP site. The active-site Proton acceptor is Asp13. Positions 13 and 40 each coordinate Mg(2+). IMP-binding positions include 13 to 16 (DEGK), 38 to 41 (NAGH), Thr129, Arg143, Gln223, Thr238, and Arg302. His41 serves as the catalytic Proton donor. Substrate is bound at residue 298 to 304 (TVTGRKR). GTP is bound by residues Arg304, 330 to 332 (KLD), and 412 to 414 (STS).

The protein belongs to the adenylosuccinate synthetase family. In terms of assembly, homodimer. Mg(2+) is required as a cofactor.

It is found in the cytoplasm. It catalyses the reaction IMP + L-aspartate + GTP = N(6)-(1,2-dicarboxyethyl)-AMP + GDP + phosphate + 2 H(+). Its pathway is purine metabolism; AMP biosynthesis via de novo pathway; AMP from IMP: step 1/2. Its function is as follows. Plays an important role in the de novo pathway of purine nucleotide biosynthesis. Catalyzes the first committed step in the biosynthesis of AMP from IMP. The sequence is that of Adenylosuccinate synthetase from Novosphingobium aromaticivorans (strain ATCC 700278 / DSM 12444 / CCUG 56034 / CIP 105152 / NBRC 16084 / F199).